The chain runs to 107 residues: MTTEIKKLDPDTAIDIAYDIFLEMAGENLDPAYILLFNLQFEERGGVEFVETADDWEEEIGVLIDPEEYAEVWVGLVNKQDEMDDVFAKFLISHREEDREFHVIWKK.

The protein belongs to the putative dsDNA mimic protein family.

Functionally, may act as a double-stranded DNA (dsDNA) mimic. Probably regulates the activity of a dsDNA-binding protein. The chain is Putative double-stranded DNA mimic protein NTHI1680 from Haemophilus influenzae (strain 86-028NP).